A 364-amino-acid polypeptide reads, in one-letter code: Fructose-bisphosphate aldolase C (364 aa).

At Tyr-5 the chain carries Phosphotyrosine. 3 positions are modified to phosphoserine: Ser-36, Ser-39, and Ser-45. Residue Arg-56 coordinates substrate. Lys-111 is subject to N6-acetyllysine. Ser-132 is subject to Phosphoserine. Lys-147 is a binding site for substrate. Glu-188 acts as the Proton acceptor in catalysis. Lys-230 functions as the Schiff-base intermediate with dihydroxyacetone-P in the catalytic mechanism.

This sequence belongs to the class I fructose-bisphosphate aldolase family. As to quaternary structure, homotetramer. Interacts with ATP6V1E1. May interact with PLD2.

It carries out the reaction beta-D-fructose 1,6-bisphosphate = D-glyceraldehyde 3-phosphate + dihydroxyacetone phosphate. It participates in carbohydrate degradation; glycolysis; D-glyceraldehyde 3-phosphate and glycerone phosphate from D-glucose: step 4/4. The sequence is that of Fructose-bisphosphate aldolase C (ALDOC) from Homo sapiens (Human).